A 76-amino-acid chain; its full sequence is Cytochrome c oxidase subunit 6C-2 (76 aa).

Over Gly4–Gly14 the chain is Mitochondrial matrix. A helical membrane pass occupies residues Leu15–Arg55. Residues Asn56 to Lys76 are Mitochondrial intermembrane-facing. Phosphoserine is present on Ser74.

Belongs to the cytochrome c oxidase subunit 6c family. Component of the cytochrome c oxidase (complex IV, CIV), a multisubunit enzyme composed of 14 subunits. The complex is composed of a catalytic core of 3 subunits MT-CO1, MT-CO2 and MT-CO3, encoded in the mitochondrial DNA, and 11 supernumerary subunits COX4I, COX5A, COX5B, COX6A, COX6B, COX6C, COX7A, COX7B, COX7C, COX8 and NDUFA4, which are encoded in the nuclear genome. The complex exists as a monomer or a dimer and forms supercomplexes (SCs) in the inner mitochondrial membrane with NADH-ubiquinone oxidoreductase (complex I, CI) and ubiquinol-cytochrome c oxidoreductase (cytochrome b-c1 complex, complex III, CIII), resulting in different assemblies (supercomplex SCI(1)III(2)IV(1) and megacomplex MCI(2)III(2)IV(2)).

The protein resides in the mitochondrion inner membrane. The protein operates within energy metabolism; oxidative phosphorylation. Component of the cytochrome c oxidase, the last enzyme in the mitochondrial electron transport chain which drives oxidative phosphorylation. The respiratory chain contains 3 multisubunit complexes succinate dehydrogenase (complex II, CII), ubiquinol-cytochrome c oxidoreductase (cytochrome b-c1 complex, complex III, CIII) and cytochrome c oxidase (complex IV, CIV), that cooperate to transfer electrons derived from NADH and succinate to molecular oxygen, creating an electrochemical gradient over the inner membrane that drives transmembrane transport and the ATP synthase. Cytochrome c oxidase is the component of the respiratory chain that catalyzes the reduction of oxygen to water. Electrons originating from reduced cytochrome c in the intermembrane space (IMS) are transferred via the dinuclear copper A center (CU(A)) of subunit 2 and heme A of subunit 1 to the active site in subunit 1, a binuclear center (BNC) formed by heme A3 and copper B (CU(B)). The BNC reduces molecular oxygen to 2 water molecules using 4 electrons from cytochrome c in the IMS and 4 protons from the mitochondrial matrix. In Rattus norvegicus (Rat), this protein is Cytochrome c oxidase subunit 6C-2 (Cox6c2).